The primary structure comprises 108 residues: UPF0102 protein Sbal_4100 (108 aa).

Belongs to the UPF0102 family.

In Shewanella baltica (strain OS155 / ATCC BAA-1091), this protein is UPF0102 protein Sbal_4100.